The chain runs to 57 residues: DNA gyrase inhibitor YacG (57 aa).

Residues C10, C13, C25, and C29 each contribute to the Zn(2+) site.

It belongs to the DNA gyrase inhibitor YacG family. Interacts with GyrB. It depends on Zn(2+) as a cofactor.

In terms of biological role, inhibits all the catalytic activities of DNA gyrase by preventing its interaction with DNA. Acts by binding directly to the C-terminal domain of GyrB, which probably disrupts DNA binding by the gyrase. The sequence is that of DNA gyrase inhibitor YacG from Brucella abortus (strain 2308).